Here is a 249-residue protein sequence, read N- to C-terminus: Small ribosomal subunit protein eS6 (249 aa).

Disordered stretches follow at residues 161–181 (PLAKEGKKPRTKAPKIQRLVT) and 194–249 (LKKQ…SSQK). Residues 216 to 229 (RSKEAKEKRQEQIA) show a composition bias toward basic and acidic residues. A phosphoserine mark is found at Ser235, Ser236, Ser240, Ser244, and Ser247. Over residues 236–249 (SLRASTSKSESSQK) the composition is skewed to low complexity.

It belongs to the eukaryotic ribosomal protein eS6 family. As to quaternary structure, component of the small ribosomal subunit. Part of the small subunit (SSU) processome, composed of more than 70 proteins and the RNA chaperone small nucleolar RNA (snoRNA) U3. Post-translationally, ribosomal protein S6 is the major substrate of protein kinases in eukaryote ribosomes. The phosphorylation is stimulated by growth factors, tumor promoting agents, and mitogens. It is dephosphorylated at growth arrest.

The protein localises to the cytoplasm. Its subcellular location is the nucleus. It localises to the nucleolus. In terms of biological role, component of the 40S small ribosomal subunit. Plays an important role in controlling cell growth and proliferation through the selective translation of particular classes of mRNA. Part of the small subunit (SSU) processome, first precursor of the small eukaryotic ribosomal subunit. During the assembly of the SSU processome in the nucleolus, many ribosome biogenesis factors, an RNA chaperone and ribosomal proteins associate with the nascent pre-rRNA and work in concert to generate RNA folding, modifications, rearrangements and cleavage as well as targeted degradation of pre-ribosomal RNA by the RNA exosome. The polypeptide is Small ribosomal subunit protein eS6 (rps6) (Xenopus laevis (African clawed frog)).